Reading from the N-terminus, the 299-residue chain is NAD kinase (299 aa).

The active-site Proton acceptor is Asp-71. NAD(+)-binding positions include 71-72 (DG), 145-146 (ND), Arg-173, Asp-175, 186-191 (TAYSLS), Ala-210, and Gln-248.

This sequence belongs to the NAD kinase family. Requires a divalent metal cation as cofactor.

The protein localises to the cytoplasm. The enzyme catalyses NAD(+) + ATP = ADP + NADP(+) + H(+). Functionally, involved in the regulation of the intracellular balance of NAD and NADP, and is a key enzyme in the biosynthesis of NADP. Catalyzes specifically the phosphorylation on 2'-hydroxyl of the adenosine moiety of NAD to yield NADP. The protein is NAD kinase of Bordetella pertussis (strain Tohama I / ATCC BAA-589 / NCTC 13251).